Here is a 341-residue protein sequence, read N- to C-terminus: L-threonine 3-dehydrogenase (341 aa).

Cys-38 serves as a coordination point for Zn(2+). Residues Thr-40 and His-43 each act as charge relay system in the active site. 6 residues coordinate Zn(2+): His-63, Glu-64, Cys-93, Cys-96, Cys-99, and Cys-107. Residues Ile-175, Asp-195, Arg-200, 262 to 264 (LGI), and 286 to 287 (IY) contribute to the NAD(+) site.

This sequence belongs to the zinc-containing alcohol dehydrogenase family. Homotetramer. Zn(2+) serves as cofactor.

It localises to the cytoplasm. It carries out the reaction L-threonine + NAD(+) = (2S)-2-amino-3-oxobutanoate + NADH + H(+). It functions in the pathway amino-acid degradation; L-threonine degradation via oxydo-reductase pathway; glycine from L-threonine: step 1/2. Its function is as follows. Catalyzes the NAD(+)-dependent oxidation of L-threonine to 2-amino-3-ketobutyrate. This is L-threonine 3-dehydrogenase from Escherichia fergusonii (strain ATCC 35469 / DSM 13698 / CCUG 18766 / IAM 14443 / JCM 21226 / LMG 7866 / NBRC 102419 / NCTC 12128 / CDC 0568-73).